The chain runs to 1409 residues: CRISPR-associated endonuclease Cas9 (1409 aa).

Catalysis depends on aspartate 31, which acts as the For RuvC-like nuclease domain. Residues aspartate 31, glutamate 784, and glutamate 788 each contribute to the Mg(2+) site. The 158-residue stretch at 792-949 folds into the HNH Cas9-type domain; it reads TNQGKSNSQQ…DKAGFIQRQL (158 aa). Histidine 868 functions as the Proton acceptor for HNH nuclease domain in the catalytic mechanism. Histidine 1011 serves as a coordination point for Mg(2+). Basic and acidic residues predominate over residues 1121–1130; sequence EQNHGLDRGK. Residues 1121–1151 form a disordered region; that stretch reads EQNHGLDRGKPKGLFNANLSSKPKPNSNENL. Residues 1137–1150 are compositionally biased toward polar residues; sequence ANLSSKPKPNSNEN.

The protein belongs to the CRISPR-associated protein Cas9 family. Subtype II-A subfamily. Monomer. Binds crRNA and tracrRNA. Requires Mg(2+) as cofactor.

Only has nuclease activity when bound to both gRNAs (crRNA plus tracrRNA). Functionally, CRISPR (clustered regularly interspaced short palindromic repeat) is an adaptive immune system that provides protection against mobile genetic elements (viruses, transposable elements and conjugative plasmids). CRISPR clusters contain spacers, sequences complementary to antecedent mobile elements, and target invading nucleic acids. CRISPR clusters are transcribed and processed into CRISPR RNA (crRNA). In type II CRISPR systems correct processing of pre-crRNA requires a trans-encoded small RNA (tracrRNA), endogenous ribonuclease 3 (rnc) and Cas9. The tracrRNA serves as a guide for ribonuclease 3-aided processing of pre-crRNA. Cas9/crRNA/tracrRNA endonucleolytically cleaves linear or circular dsDNA target complementary to the spacer yielding blunt ends; Cas9 is inactive in the absence of the 2 guide RNAs (gRNA). Cas9 recognizes a 3'-G-rich protospacer adjacent motif (PAM, TGGTG in this organism) in the CRISPR repeat sequences to help distinguish self versus nonself, as targets within the bacterial CRISPR locus do not have PAMs. PAM recognition is also required for catalytic activity. When the CRISPR3/cas system consisting of cas9-cas1-cas2-csn2-CRISPR3 or just cas9-CRISPR3 is expressed in E.coli it prevents plasmids homologous to spacers 1 or 2 from transforming. The chain is CRISPR-associated endonuclease Cas9 from Streptococcus thermophilus.